The primary structure comprises 424 residues: Calreticulin (424 aa).

The signal sequence occupies residues 1–29 (MAIRARSSSYAAAAVALALALASVAAVAG). N-linked (GlcNAc...) asparagine glycosylation is present at Asn-61. Cys-115 and Cys-147 are disulfide-bonded. An alpha-D-glucoside is bound by residues Tyr-119, Lys-121, Tyr-138, and Asp-145. Repeat copies occupy residues 201 to 212 (KQSGSIYEHWDI), 220 to 231 (DPEAKKPEDWDD), 237 to 248 (DPEDKKPEGYDD), 255 to 266 (DPDAKKPEDWDD), 270 to 280 (GEWTAPTIPNP), 284 to 294 (GPWKQKKIKNP), and 298 to 308 (GKWKAPMIDNP). A 4 X approximate repeats region spans residues 201-266 (KQSGSIYEHW…DAKKPEDWDD (66 aa)). Residues 217–262 (QIKDPEAKKPEDWDDKEYIPDPEDKKPEGYDDIPKEIPDPDAKKPE) are compositionally biased toward basic and acidic residues. Residues 217–289 (QIKDPEAKKP…PEYKGPWKQK (73 aa)) form a disordered region. Positions 270-308 (GEWTAPTIPNPEYKGPWKQKKIKNPNYQGKWKAPMIDNP) are 3 X approximate repeats. An alpha-D-glucoside is bound at residue Glu-328. Positions 356–385 (ETWGKHKDAEKAAFDEAEKKKEEEEAAKAG) are enriched in basic and acidic residues. Residues 356–424 (ETWGKHKDAE…DSDDEKHDEL (69 aa)) are disordered. The segment covering 386-401 (EDDDDLDDEDAEDEDK) has biased composition (acidic residues). Basic and acidic residues predominate over residues 402–424 (ADEKADSDAEDGKDSDDEKHDEL). The short motif at 421 to 424 (HDEL) is the Prevents secretion from ER element.

Belongs to the calreticulin family. Post-translationally, phosphorylated.

The protein localises to the endoplasmic reticulum lumen. Functionally, molecular calcium-binding chaperone promoting folding, oligomeric assembly and quality control in the ER via the calreticulin/calnexin cycle. This lectin may interact transiently with almost all of the monoglucosylated glycoproteins that are synthesized in the ER. This chain is Calreticulin, found in Oryza sativa subsp. japonica (Rice).